A 243-amino-acid polypeptide reads, in one-letter code: UPF0758 protein PCC7424_2073 (243 aa).

Residues 112-235 enclose the MPN domain; that stretch reads VEINDPVSAV…HQSLRTVTDL (124 aa). 3 residues coordinate Zn(2+): H184, H186, and D197. A JAMM motif motif is present at residues 184 to 197; sequence HNHPSGNVAPSQED.

This sequence belongs to the UPF0758 family.

This Gloeothece citriformis (strain PCC 7424) (Cyanothece sp. (strain PCC 7424)) protein is UPF0758 protein PCC7424_2073.